Here is a 402-residue protein sequence, read N- to C-terminus: MTTATDGSADGRLRVLVLGSTGSIGTQALEVIAANPDRFEVVGLAAGGSNLDTLLRQRAETGVTEIAIADERAAQLAGDIAYQGPDAVTRLVEETEADVVLNALVGALGLRPTLAALASGARLALANKESLVAGGPLVLQAAQPGQIVPVDSEHSALAQCLRAGTPDEVAKLVLTASGGPFRGWSAADLQEVTPEQAGAHPTWSMGPMNTLNSASLVNKGLELIETHLLFGIPYERIEVVVHPQSIVHSMVTFVDGSTIAQASPPDMKLPISLALGWPRRVPGAARYCDFSQAQTWEFEPLDDEVFPAVELARHAGETGGCMTAVYNAANEEAAAAFLAGRISFPAIVGTIADVLHAADQWAVSPANVDDVLDAQRWARQRAQRAIAKASPAGACEKVSGLA.

NADPH-binding residues include Thr-21, Gly-22, Ser-23, Ile-24, Gly-47, Asn-50, and Asn-127. A 1-deoxy-D-xylulose 5-phosphate-binding site is contributed by Lys-128. Glu-129 contributes to the NADPH binding site. Asp-151 is a Mn(2+) binding site. Ser-152, Glu-153, Ser-177, and His-200 together coordinate 1-deoxy-D-xylulose 5-phosphate. Glu-153 provides a ligand contact to Mn(2+). Gly-206 provides a ligand contact to NADPH. The 1-deoxy-D-xylulose 5-phosphate site is built by Ser-213, Asn-218, Lys-219, and Glu-222. Glu-222 lines the Mn(2+) pocket.

The protein belongs to the DXR family. Requires Mg(2+) as cofactor. It depends on Mn(2+) as a cofactor.

It carries out the reaction 2-C-methyl-D-erythritol 4-phosphate + NADP(+) = 1-deoxy-D-xylulose 5-phosphate + NADPH + H(+). It participates in isoprenoid biosynthesis; isopentenyl diphosphate biosynthesis via DXP pathway; isopentenyl diphosphate from 1-deoxy-D-xylulose 5-phosphate: step 1/6. Catalyzes the NADPH-dependent rearrangement and reduction of 1-deoxy-D-xylulose-5-phosphate (DXP) to 2-C-methyl-D-erythritol 4-phosphate (MEP). In Mycobacterium marinum (strain ATCC BAA-535 / M), this protein is 1-deoxy-D-xylulose 5-phosphate reductoisomerase.